Here is a 207-residue protein sequence, read N- to C-terminus: Large ribosomal subunit protein uL4 (207 aa).

Positions 49–75 (HAVKNRSAVSGGGRKPWKQKGTGRARA) are disordered.

Belongs to the universal ribosomal protein uL4 family. Part of the 50S ribosomal subunit.

One of the primary rRNA binding proteins, this protein initially binds near the 5'-end of the 23S rRNA. It is important during the early stages of 50S assembly. It makes multiple contacts with different domains of the 23S rRNA in the assembled 50S subunit and ribosome. In terms of biological role, forms part of the polypeptide exit tunnel. The protein is Large ribosomal subunit protein uL4 of Leuconostoc mesenteroides subsp. mesenteroides (strain ATCC 8293 / DSM 20343 / BCRC 11652 / CCM 1803 / JCM 6124 / NCDO 523 / NBRC 100496 / NCIMB 8023 / NCTC 12954 / NRRL B-1118 / 37Y).